Consider the following 615-residue polypeptide: MPIQVLPPQLANQIAAGEVVERPASVVKELVENSLDAGATRIDIDIERGGAKLIRIRDNGCGIKKDELALALARHATSKIASLDDLEAIISLGFRGEALASISSVSRLTLTSRTAEQQEAWQAYAEGRDMDVTVKPAAHPVGTTLEVLDLFYNTPARRKFLRTEKTEFNHIDEIIRRIALARFDVTINLSHNGKIVRQYRAVPEGGQKERRLGAICGTAFLEQALAIEWQHGDLTLRGWVADPNHTTPALAEIQYCYVNGRMMRDRLINHAIRQACEDKLGADQQPAFVLYLEIDPHQVDVNVHPAKHEVRFHQSRLVHDFIYQGVLSVLQQQLETPLPLDDEPQPAPRAIPENRVAAGRNHFAEPAVREPVAPLYTPAPASGSRPAAPWPNAQPGYQKQQGEVYRQLLQTPAPMQKPKAPEPQEPALAANSQSFGRVLTIVHSDCALLELDGNISLLALPVAERWLRQAQLTPGEAPVCAQPLLIPLRLKVSGEEKSALEKAQSALAELGIDFQSDAQHVTIRAVPLPLRQQNLQILIPELIGYLAKQSVFEPGNIAQWIARNLMSEHAQWSMAQAITLLADVERLCPQLVKTPPGGLLQSVDLHPAIKALKDE.

The segment covering 378–391 (PAPASGSRPAAPWP) has biased composition (low complexity). Residues 378–397 (PAPASGSRPAAPWPNAQPGY) form a disordered region.

Belongs to the DNA mismatch repair MutL/HexB family.

Its function is as follows. This protein is involved in the repair of mismatches in DNA. It is required for dam-dependent methyl-directed DNA mismatch repair. May act as a 'molecular matchmaker', a protein that promotes the formation of a stable complex between two or more DNA-binding proteins in an ATP-dependent manner without itself being part of a final effector complex. In Escherichia coli O127:H6 (strain E2348/69 / EPEC), this protein is DNA mismatch repair protein MutL.